The sequence spans 172 residues: Putative B3 domain-containing protein At1g05615 (172 aa).

Positions 69-169 form a DNA-binding region, TF-B3; the sequence is VDEGKIIDFE…NLAMVPLTPT (101 aa).

It is found in the nucleus. The chain is Putative B3 domain-containing protein At1g05615 from Arabidopsis thaliana (Mouse-ear cress).